The following is a 1285-amino-acid chain: ABC-type transporter fsqE (1285 aa).

An ABC transmembrane type-1 1 domain is found at 54 to 343 (VSSICAVLAG…IAPSAQALLS (290 aa)). Helical transmembrane passes span 57–77 (ICAVLAGALNPLVPVIYGLLV), 102–122 (LYYVYLSIGLFAFTYVATVGF), 176–196 (LAVMLTAIATFCAAFVVAFIM), 203–223 (IISPFFVIMIVTETLGGAYMV), 281–301 (VAGMIAWMNAMPNLIYALAFW), and 312–332 (MSVAEVSATTLAVTIGSFAII). One can recognise an ABC transporter 1 domain in the interval 380 to 622 (LDRVGLIYPS…NGAYAALVQK (243 aa)). 413 to 420 (GSSGSGKS) is an ATP binding site. Asn467 carries N-linked (GlcNAc...) asparagine glycosylation. The segment at 627–654 (DTHDHKAPDGARLSIEDDDDEDSRYGGN) is disordered. The next 6 helical transmembrane spans lie at 707–727 (LFGLANAILAGLTIPVQSVFF), 753–773 (GLYVMLTGTTFLFWMGVEIAL), 831–851 (GILTFLSTILAGIVLALAIGW), 855–875 (LVCTATIPIVVACGWLRLQVL), 931–951 (ILLASALYAASASVVYLCAAL), and 968–988 (FQVYICFVSLISGSQIAGSIF). One can recognise an ABC transmembrane type-1 2 domain in the interval 713-996 (AILAGLTIPV…IFTYAPDASK (284 aa)). Asn1037 carries N-linked (GlcNAc...) asparagine glycosylation. Positions 1043 to 1281 (VEFEHVSFTY…RGKYWEMVSM (239 aa)) constitute an ABC transporter 2 domain. 1078 to 1085 (GQSGSGKS) serves as a coordination point for ATP. An N-linked (GlcNAc...) asparagine glycan is attached at Asn1138.

It belongs to the ABC transporter superfamily. ABCB family. Multidrug resistance exporter (TC 3.A.1.201) subfamily.

Its subcellular location is the membrane. It participates in secondary metabolite biosynthesis. Functionally, ABC-type transporter; part of the gene cluster that mediates the biosynthesis of the isoquinoline alkaloids fumisoquin A, fumisoquin B and fumisoquin C; as well as small amounts of fumipyrrole as a shunt metabolite. The products of the cluster lead to a brown coloration and are important for growth and conidiation. FsqE possibly plays a role of self-protection. The polypeptide is ABC-type transporter fsqE (Aspergillus fumigatus (strain ATCC MYA-4609 / CBS 101355 / FGSC A1100 / Af293) (Neosartorya fumigata)).